A 172-amino-acid polypeptide reads, in one-letter code: Ribosome maturation factor RimM (172 aa).

Positions 96–168 (DGEFYYHEII…RVQVELMEGL (73 aa)) constitute a PRC barrel domain.

It belongs to the RimM family. As to quaternary structure, binds ribosomal protein uS19.

Its subcellular location is the cytoplasm. Its function is as follows. An accessory protein needed during the final step in the assembly of 30S ribosomal subunit, possibly for assembly of the head region. Essential for efficient processing of 16S rRNA. May be needed both before and after RbfA during the maturation of 16S rRNA. It has affinity for free ribosomal 30S subunits but not for 70S ribosomes. In Streptococcus agalactiae serotype Ia (strain ATCC 27591 / A909 / CDC SS700), this protein is Ribosome maturation factor RimM.